Here is a 96-residue protein sequence, read N- to C-terminus: Prokineticin Bm8-d (96 aa).

The N-terminal stretch at 1 to 19 (MKCFAQIVVLLLVIAFSHG) is a signal peptide. 5 disulfide bridges follow: cysteine 26/cysteine 38, cysteine 32/cysteine 50, cysteine 37/cysteine 78, cysteine 60/cysteine 86, and cysteine 80/cysteine 95.

It belongs to the AVIT (prokineticin) family. As to expression, expressed by the skin glands.

It is found in the secreted. Potent agonist for both PKR1/PROKR1 and PKR2/PROKR2, and inducer of a potent and long-lasting hyperalgesia. Also potentiates capsaicin-induced TRPV1 current, when tested on DRG neurons. At subnanomolar concentrations, this protein both induces potent chemotaxis of macrophages and stimulates LPS-induced production of the pro-inflammatory cytokines IL-1 and IL-12. In vivo, potently stimulates the contraction of the guinea-pig gastrointestinal (GI) smooth muscle (nanomolar concentration). The chain is Prokineticin Bm8-d from Bombina maxima (Giant fire-bellied toad).